The chain runs to 128 residues: Type III secretion protein HrcQb (128 aa).

A compositionally biased stretch (acidic residues) spans 1–21; it reads MSTEDLYQEDVEMLDDYEDPS. The disordered stretch occupies residues 1–57; the sequence is MSTEDLYQEDVEMLDDYEDPSTEQHWSEEDGEPSGYATAEPDDHAAQEEQDEPPALD. Positions 50–128 are hrcQb-C; that stretch reads QDEPPALDSL…LQITRLVTRS (79 aa). The tract at residues 78–81 is dimer-dimer interface; it reads RRLD.

The protein belongs to the FliN/MopA/SpaO family. In terms of assembly, homotetramer. The four monomers assemble into two tightly bound homodimers. Interacts with HrcQa.

It is found in the cytoplasm. In terms of biological role, component of the type III secretion system, which is required for effector protein delivery, parasitism, and pathogenicity. Probably participates in the formation of a C-ring-like assembly along with HrcQa. The chain is Type III secretion protein HrcQb (hrcQb) from Pseudomonas savastanoi pv. phaseolicola (Pseudomonas syringae pv. phaseolicola).